Here is a 497-residue protein sequence, read N- to C-terminus: Glycerol kinase (497 aa).

T11 is a binding site for ADP. Residues T11, S12, and S13 each contribute to the ATP site. T11 serves as a coordination point for sn-glycerol 3-phosphate. R15 lines the ADP pocket. The sn-glycerol 3-phosphate site is built by R81, E82, Y133, and D242. Residues R81, E82, Y133, D242, and Q243 each contribute to the glycerol site. Positions 264 and 307 each coordinate ADP. Residues T264, G307, Q311, and G412 each coordinate ATP. G412 and N416 together coordinate ADP.

The protein belongs to the FGGY kinase family.

It carries out the reaction glycerol + ATP = sn-glycerol 3-phosphate + ADP + H(+). It participates in polyol metabolism; glycerol degradation via glycerol kinase pathway; sn-glycerol 3-phosphate from glycerol: step 1/1. With respect to regulation, inhibited by fructose 1,6-bisphosphate (FBP). In terms of biological role, key enzyme in the regulation of glycerol uptake and metabolism. Catalyzes the phosphorylation of glycerol to yield sn-glycerol 3-phosphate. This chain is Glycerol kinase, found in Polaromonas naphthalenivorans (strain CJ2).